A 576-amino-acid chain; its full sequence is Arginine--tRNA ligase (576 aa).

A 'HIGH' region motif is present at residues Pro-122–His-132.

Belongs to the class-I aminoacyl-tRNA synthetase family. As to quaternary structure, monomer.

The protein resides in the cytoplasm. The enzyme catalyses tRNA(Arg) + L-arginine + ATP = L-arginyl-tRNA(Arg) + AMP + diphosphate. This chain is Arginine--tRNA ligase, found in Photorhabdus laumondii subsp. laumondii (strain DSM 15139 / CIP 105565 / TT01) (Photorhabdus luminescens subsp. laumondii).